The chain runs to 700 residues: Elongation factor G (700 aa).

The 283-residue stretch at 8 to 290 (DKYRNIGISA…AVVELLPSPL (283 aa)) folds into the tr-type G domain. Residues 17-24 (AHIDAGKT), 88-92 (DTPGH), and 142-145 (NKMD) each bind GTP.

The protein belongs to the TRAFAC class translation factor GTPase superfamily. Classic translation factor GTPase family. EF-G/EF-2 subfamily.

The protein resides in the cytoplasm. Catalyzes the GTP-dependent ribosomal translocation step during translation elongation. During this step, the ribosome changes from the pre-translocational (PRE) to the post-translocational (POST) state as the newly formed A-site-bound peptidyl-tRNA and P-site-bound deacylated tRNA move to the P and E sites, respectively. Catalyzes the coordinated movement of the two tRNA molecules, the mRNA and conformational changes in the ribosome. This is Elongation factor G from Polynucleobacter necessarius subsp. necessarius (strain STIR1).